Consider the following 374-residue polypeptide: RNA polymerase sigma factor SigA (374 aa).

The sigma-70 factor domain-2 stretch occupies residues L141–T211. The Interaction with polymerase core subunit RpoC signature appears at D165 to Q168. Positions E220–H296 are sigma-70 factor domain-3. Residues V309–H362 form a sigma-70 factor domain-4 region. The H-T-H motif DNA-binding region spans L335–A354.

It belongs to the sigma-70 factor family. RpoD/SigA subfamily. Interacts transiently with the RNA polymerase catalytic core.

The protein localises to the cytoplasm. Sigma factors are initiation factors that promote the attachment of RNA polymerase to specific initiation sites and are then released. This sigma factor is the primary sigma factor during exponential growth. The polypeptide is RNA polymerase sigma factor SigA (Listeria innocua serovar 6a (strain ATCC BAA-680 / CLIP 11262)).